We begin with the raw amino-acid sequence, 897 residues long: F-BAR domain only protein 1 (897 aa).

The segment at 1-276 is mediates membrane-binding; it reads MIHFFHTLQG…VGFEEYLSSL (276 aa). Residues 2–248 enclose the F-BAR domain; the sequence is IHFFHTLQGE…NVENIGIENL (247 aa). The stretch at 134–154 forms a coiled coil; sequence LQKTREGYHSKCVELERLRKE. The disordered stretch occupies residues 475–537; it reads VEDSGLDSPS…PNPAPSSQSN (63 aa). A compositionally biased stretch (polar residues) spans 501-520; the sequence is PSSQSQSKDSINAASQSRGG. The 265-residue stretch at 630–894 folds into the MHD domain; it reads SWPVAAAITE…RFATGKYMAG (265 aa).

Belongs to the FCHO family. In terms of assembly, may oligomerize and form homotetramer. Interacts with acvr1l/alk8; linking this receptor to clathrin-mediated endocytosis.

The protein localises to the membrane. It localises to the clathrin-coated pit. Its function is as follows. May function in an early step of clathrin-mediated endocytosis. May regulate Bmp signaling by regulating clathrin-mediated endocytosis of Bmp receptors. This Danio rerio (Zebrafish) protein is F-BAR domain only protein 1 (fcho1).